A 458-amino-acid polypeptide reads, in one-letter code: NADH-quinone oxidoreductase subunit N 1 (458 aa).

The next 14 helical transmembrane spans lie at 12 to 32 (ALIP…AGLL), 37 to 57 (EVLV…IPSF), 70 to 90 (FLTI…LLVL), 101 to 121 (FNES…LVSA), 124 to 144 (LISF…LVGI), 159 to 179 (FMLG…IYGA), 199 to 219 (ILIG…LVPF), 230 to 250 (APTP…LGAF), 266 to 286 (SNFL…FALI), 293 to 313 (MLAY…IVGT), 321 to 341 (VAYM…VIAF), 361 to 381 (IAML…GFIV), 393 to 413 (GFTW…YYYL), and 438 to 458 (VAIL…LFLI).

This sequence belongs to the complex I subunit 2 family. In terms of assembly, NDH-1 is composed of 14 different subunits. Subunits NuoA, H, J, K, L, M, N constitute the membrane sector of the complex.

It is found in the cell inner membrane. The enzyme catalyses a quinone + NADH + 5 H(+)(in) = a quinol + NAD(+) + 4 H(+)(out). Functionally, NDH-1 shuttles electrons from NADH, via FMN and iron-sulfur (Fe-S) centers, to quinones in the respiratory chain. The immediate electron acceptor for the enzyme in this species is believed to be ubiquinone. Couples the redox reaction to proton translocation (for every two electrons transferred, four hydrogen ions are translocated across the cytoplasmic membrane), and thus conserves the redox energy in a proton gradient. This Thermodesulfovibrio yellowstonii (strain ATCC 51303 / DSM 11347 / YP87) protein is NADH-quinone oxidoreductase subunit N 1.